Reading from the N-terminus, the 1829-residue chain is Unconventional myosin-Va (1829 aa).

Residues 8–60 (TKYARVWIPDPEEVWKSAELLKDYKPGDKVLQLRLEEGKDLEYCLDPKTKELP) form the Myosin N-terminal SH3-like domain. The 696-residue stretch at 69-764 (VGENDLTALS…QVAYLEKIRA (696 aa)) folds into the Myosin motor domain. ATP is bound at residue 163–170 (GESGAGKT). The segment at 599-635 (AISPTSATPSGRVPLSRTPVKPAKARPGQTSKEHKKT) is disordered. Positions 644-666 (LHLLMETLNATTPHYVRCIKPND) are actin-binding. IQ domains follow at residues 767 to 789 (LRAA…KYMR), 790 to 814 (MRRA…TFLR), 815 to 837 (RTRA…RYQC), 838 to 862 (MRDA…QMML), 863 to 887 (REHK…HRTL), and 888 to 915 (KAIV…EARS). 2 coiled-coil regions span residues 916 to 1239 (VERY…PEVT) and 1315 to 1419 (GLKE…ELEV). 2 disordered regions span residues 1106–1148 (IPKP…SEKK) and 1170–1199 (KQSL…PIRG). Positions 1117 to 1131 (THSSNESEYTFSSEI) are enriched in polar residues. 2 stretches are compositionally biased toward basic and acidic residues: residues 1137 to 1148 (LPLRMEEPSEKK) and 1170 to 1196 (KQSL…ERPP). In terms of domain architecture, Dilute spans 1508 to 1784 (TSTINGIKKV…IRTIQLRLRD (277 aa)). Threonine 1734 bears the Phosphothreonine mark.

The protein belongs to the TRAFAC class myosin-kinesin ATPase superfamily. Myosin family. In terms of assembly, may be a homodimer, which associates with multiple calmodulin or myosin light chains. In terms of tissue distribution, neuronal and non-neuronal cells of the brain.

It localises to the golgi apparatus membrane. It catalyses the reaction ATP + H2O = ADP + phosphate + H(+). In terms of biological role, processive actin-based motor that can move in large steps approximating the 36-nm pseudo-repeat of the actin filament. Can hydrolyze ATP in the presence of actin, which is essential for its function as a motor protein. Involved in melanosome transport. Also mediates the transport of vesicles to the plasma membrane. May also be required for some polarization process involved in dendrite formation. The polypeptide is Unconventional myosin-Va (MYO5A) (Gallus gallus (Chicken)).